The sequence spans 250 residues: Indole-3-glycerol phosphate synthase (250 aa).

The protein belongs to the TrpC family.

It carries out the reaction 1-(2-carboxyphenylamino)-1-deoxy-D-ribulose 5-phosphate + H(+) = (1S,2R)-1-C-(indol-3-yl)glycerol 3-phosphate + CO2 + H2O. It functions in the pathway amino-acid biosynthesis; L-tryptophan biosynthesis; L-tryptophan from chorismate: step 4/5. The chain is Indole-3-glycerol phosphate synthase from Metallosphaera sedula (strain ATCC 51363 / DSM 5348 / JCM 9185 / NBRC 15509 / TH2).